A 225-amino-acid chain; its full sequence is Protein-disulfide oxidoreductase DsbI (225 aa).

Residues 27-47 (FLWLLMAIAMGGLIILAHSFF) form a helical membrane-spanning segment. Cysteine 56 and cysteine 59 are disulfide-bonded. 2 helical membrane passes run 65-85 (AMFVMVIGGVIAAINPKNIVL) and 87-107 (LIGCIAAFYGSIMGIKFSIKL). Cysteines 128 and 154 form a disulfide. Residues 199–219 (CMLAFGLCLILLLVMSGAWAL) form a helical membrane-spanning segment.

Belongs to the DsbB family. DsbI subfamily. In terms of assembly, interacts with DsbL.

Its subcellular location is the cell inner membrane. Functionally, required for disulfide bond formation in some proteins. Part of a redox system composed of DsbI and DsbL that mediates formation of an essential disulfide bond in AssT. In Salmonella choleraesuis (strain SC-B67), this protein is Protein-disulfide oxidoreductase DsbI.